Consider the following 393-residue polypeptide: Formate-dependent phosphoribosylglycinamide formyltransferase (393 aa).

N(1)-(5-phospho-beta-D-ribosyl)glycinamide contacts are provided by residues 22–23 (EL) and Glu-82. ATP contacts are provided by residues Arg-114, Lys-155, 160-165 (SSGHGQ), 195-198 (EGFV), and Glu-203. In terms of domain architecture, ATP-grasp spans 119–308 (RLAAEELGLP…EFALHARAIL (190 aa)). 2 residues coordinate Mg(2+): Glu-267 and Glu-279. Residues Asp-286, Lys-356, and 363–364 (RR) each bind N(1)-(5-phospho-beta-D-ribosyl)glycinamide.

The protein belongs to the PurK/PurT family. As to quaternary structure, homodimer.

The enzyme catalyses N(1)-(5-phospho-beta-D-ribosyl)glycinamide + formate + ATP = N(2)-formyl-N(1)-(5-phospho-beta-D-ribosyl)glycinamide + ADP + phosphate + H(+). Its pathway is purine metabolism; IMP biosynthesis via de novo pathway; N(2)-formyl-N(1)-(5-phospho-D-ribosyl)glycinamide from N(1)-(5-phospho-D-ribosyl)glycinamide (formate route): step 1/1. Involved in the de novo purine biosynthesis. Catalyzes the transfer of formate to 5-phospho-ribosyl-glycinamide (GAR), producing 5-phospho-ribosyl-N-formylglycinamide (FGAR). Formate is provided by PurU via hydrolysis of 10-formyl-tetrahydrofolate. This is Formate-dependent phosphoribosylglycinamide formyltransferase from Mannheimia succiniciproducens (strain KCTC 0769BP / MBEL55E).